The following is a 354-amino-acid chain: Serum paraoxonase/arylesterase 2 (354 aa).

A disulfide bridge connects residues cysteine 42 and cysteine 352. Aspartate 53 and aspartate 54 together coordinate Ca(2+). Histidine 114 (proton acceptor) is an active-site residue. Residues isoleucine 116, asparagine 167, aspartate 168, and asparagine 223 each coordinate Ca(2+). Asparagine 254 is a glycosylation site (N-linked (GlcNAc...) asparagine). Residues aspartate 268 and asparagine 269 each coordinate Ca(2+). 2 N-linked (GlcNAc...) asparagine glycosylation sites follow: asparagine 269 and asparagine 323.

Belongs to the paraoxonase family. As to quaternary structure, homotrimer. Ca(2+) is required as a cofactor. Post-translationally, glycosylated. The signal sequence is not cleaved.

It localises to the membrane. The enzyme catalyses a phenyl acetate + H2O = a phenol + acetate + H(+). The catalysed reaction is an N-acyl-L-homoserine lactone + H2O = an N-acyl-L-homoserine + H(+). Its function is as follows. Capable of hydrolyzing lactones and a number of aromatic carboxylic acid esters. The polypeptide is Serum paraoxonase/arylesterase 2 (PON2) (Canis lupus familiaris (Dog)).